Reading from the N-terminus, the 183-residue chain is MQTSLRQQILPGLSLILLVLNQVPELQGQEFRFGPCQVTGVVLPELWEAFWTVKNTVKTQDELTSVRLLKPQVLQNVSDAESCYLAHSLLKFYLNTVFKNYHSKIVKFKVLKSFSTLANNFLVIMSKLQPSKDNAMLPISDSARRRFLLYHRTFKQLDIEVALAKAFGEVDILLAWMQNFYQL.

Positions 1 to 28 (MQTSLRQQILPGLSLILLVLNQVPELQG) are cleaved as a signal peptide. Residues Cys-36 and Cys-83 are joined by a disulfide bond. Asn-76 carries N-linked (GlcNAc...) asparagine glycosylation. Residue Lys-99 forms a Glycyl lysine isopeptide (Lys-Gly) (interchain with G-Cter in ubiquitin) linkage.

This sequence belongs to the IL-10 family. In terms of processing, glycosylated. Post-translationally, ubiquitination at Lys-99 promotes proteasomal degradation.

Its subcellular location is the secreted. Functionally, multifunctional cytokine mainly produced by T-cells that plays a regulatory role in immune response, tissue homeostasis, host defense, and oncogenesis. Possesses antiviral functions and induces the type I interferon response during influenza infection. Signals through two receptor complexes IL20RA/IL20RB or IL20RB/IL22RA1. In turn, stimulates the JAK1-STAT3 and MAPK pathways and promotes the secretion of pro-inflammatory mediators including IL8 and MMP1. Intracellularly, maintains endoplasmic reticulum homeostasis by restricting the eIF2alpha-CHOP pathway-mediated stress signal. In addition, acts as a quality control mechanism for the ubiquitin proteasome system by alerting the cell to proteasome dysfunction through activation of PKR/EIF2AK2. This is Interleukin-24 (Il24) from Rattus norvegicus (Rat).